Here is a 316-residue protein sequence, read N- to C-terminus: Probable inactive poly [ADP-ribose] polymerase SRO4 (316 aa).

The interval 1–28 is disordered; the sequence is MDYSKTEETPINEEQGSTNSSESRSNEE. The segment covering 14–23 has biased composition (low complexity); the sequence is EQGSTNSSES. One can recognise a PARP catalytic domain in the interval 28-255; it reads ELFSDCDQQH…KSPWISFPVL (228 aa). The RST domain occupies 243 to 314; that stretch reads KNPKSPWISF…IKSVGQKVHK (72 aa).

The protein localises to the nucleus. Its function is as follows. Probable inactive ADP-ribosyltransferase that may be involved in stress and developmental responses. This is Probable inactive poly [ADP-ribose] polymerase SRO4 (SRO4) from Arabidopsis thaliana (Mouse-ear cress).